The chain runs to 426 residues: MAIEESPTYAEPGPYEALSRFSSLTREDHRKWWEHTGPVLEKVLKDSGYELQSQYTYLYFVQQHLVPYLGTFPTRGEDEHRWQSNLTPYKVPYELSWNISNKVVRISWDPVCDASGTEADAFNKKAIHDCTRQIAQLSNTIVLDRYRILHQELVISDQEEQELLRRDDLPKSGRGQHNLAVDFQNGGIALKVYFYPYMKFLATGSPVEQLFFAAIEKIGTADIQEPVKMLRCFLSPSFDDGKPSVDQKVFPSLLACDLCDPSKSRIKYYVIDKWVKWERIASLWTIGGRRLEDPSCAKGLALLKELWDLLAIPEGDRGDIWPNLVLGQPPTHLMTTMANYTLSPASRFPEPQVYLTTFGMNDMAIMDALTAFYERAGLTDMAKSYKKNVQSYYPNLDLSQTNWVHEAISFSYRNSKPYLSVYYSPF.

Position 94 (Glu94) interacts with substrate. The dimethylallyl diphosphate site is built by Arg105, Lys191, and Tyr193. Tyr195 lines the substrate pocket. Residues Lys267, Tyr269, Gln352, Tyr354, Tyr418, and Tyr422 each contribute to the dimethylallyl diphosphate site.

Belongs to the tryptophan dimethylallyltransferase family.

It carries out the reaction 6-hydroxydeoxybrevianamide E + dimethylallyl diphosphate = notoamide S + diphosphate. Its pathway is alkaloid biosynthesis. Functionally, prenyltransferase; part of the gene cluster that mediates the biosynthesis of notoamide, a fungal indole alkaloid that belongs to a family of natural products containing a characteristic bicyclo[2.2.2]diazaoctane core. The first step of notoamide biosynthesis involves coupling of L-proline and L-tryptophan by the bimodular NRPS notE', to produce cyclo-L-tryptophan-L-proline called brevianamide F. The reverse prenyltransferase notF' then acts as a deoxybrevianamide E synthase and converts brevianamide F to deoxybrevianamide E via reverse prenylation at C-2 of the indole ring leading to the bicyclo[2.2.2]diazaoctane core. Deoxybrevianamide E is further hydroxylated at C-6 of the indole ring, likely catalyzed by the cytochrome P450 monooxygenase notG', to yield 6-hydroxy-deoxybrevianamide E. 6-hydroxy-deoxybrevianamide E is a specific substrate of the prenyltransferase notC' for normal prenylation at C-7 to produce 6-hydroxy-7-prenyl-deoxybrevianamide, also called notoamide S. As the proposed pivotal branching point in notoamide biosynthesis, notoamide S can be diverted to notoamide E through an oxidative pyran ring closure putatively catalyzed by either notH' cytochrome P450 monooxygenase or the notD' FAD-linked oxidoreductase. This step would be followed by an indole 2,3-epoxidation-initiated pinacol-like rearrangement catalyzed by the notB' FAD-dependent monooxygenase leading to the formation of notoamide C and notoamide D. On the other hand notoamide S is converted to notoamide T by notH' (or notD'), a bifunctional oxidase that also functions as the intramolecular Diels-Alderase responsible for generation of (-)-notoamide T. To generate antipodal (+)-notoaminide T, notH (or notD) in Aspergillus strain MF297-2 is expected to catalyze a Diels-Alder reaction leading to the opposite stereochemistry. The remaining oxidoreductase notD' (or notH') likely catalyzes the oxidative pyran ring formation to yield (-)-stephacidin A. The FAD-dependent monooxygenase notI' is highly similar to notB' and is predicted to catalyze a similar conversion from (-)-stephacidin A to (+)-notoamide B via the 2,3-epoxidation of (-)-stephacidin A followed by a pinacol-type rearrangement. Finally, it remains unclear which enzyme could be responsible for the final hydroxylation steps leading to notoamide A and sclerotiamide. In Aspergillus versicolor, this protein is 6-Hydroxy-7-prenyldeoxybrevianamide E synthase notC'.